The following is a 212-amino-acid chain: uncharacterized protein (212 aa).

A helical membrane pass occupies residues V186 to V206.

Its subcellular location is the membrane. This is an uncharacterized protein from Mycoplasma genitalium (strain ATCC 33530 / DSM 19775 / NCTC 10195 / G37) (Mycoplasmoides genitalium).